The chain runs to 413 residues: Oxidoreductase vrtI (413 aa).

One can recognise a Fe2OG dioxygenase domain in the interval 235-341; it reads DAESLTTLSM…RYSIAYFLRA (107 aa). Residues His262, Asp264, and His319 each contribute to the Fe cation site. Arg332 lines the 2-oxoglutarate pocket.

This sequence belongs to the iron/ascorbate-dependent oxidoreductase family.

It functions in the pathway secondary metabolite biosynthesis; terpenoid biosynthesis. Functionally, oxidoreductase; part of the gene cluster that mediates the biosynthesis of viridicatumtoxin, a tetracycline-like fungal meroterpenoid with a unique, fused spirobicyclic ring system. The first step of the pathway is the production of the malonamoyl-CoA starter unit for the polyketide synthase vrtA. The aldolase vrtJ may be involved in the synthesis of the malonamate substrate for malonamoyl-CoA synthetase vrtB. The polyketide synthase vrtA then may utilize the malonamoyl-CoA starter unit, followed by sequential condensation of eight malonyl-CoA units to form the polyketide backbone. The cyclization of the last ring could be mediated by the lactamase-like protein vrtG. The proposed post-PKS tailoring steps are a hydroxylation at C5 catalyzed the cytochrome P450 monooxygenase vrtE, a hydroxylation at C12a catalyzed by VrtH and/or VrtI, and an O-methylation by the O-methyltransferase vrtF. VrtC is then proposed to catalyze the transfer of a geranyl group synthesized by vrtD to the aromatic C ring of the tetracyclic polyketide intermediate of viridicatumtoxin to yield previridicatumtoxin. Finally, the cytochrome P450 monooxygenase vrtK catalyzes the spirocyclization of the geranyl moiety of previridicatumtoxin to afford viridicatumtoxin. The polypeptide is Oxidoreductase vrtI (Penicillium aethiopicum).